A 258-amino-acid polypeptide reads, in one-letter code: DNA repair protein RecO (258 aa).

Belongs to the RecO family.

Functionally, involved in DNA repair and RecF pathway recombination. This Oceanobacillus iheyensis (strain DSM 14371 / CIP 107618 / JCM 11309 / KCTC 3954 / HTE831) protein is DNA repair protein RecO.